Reading from the N-terminus, the 66-residue chain is Large ribosomal subunit protein bL33c (66 aa).

This sequence belongs to the bacterial ribosomal protein bL33 family.

Its subcellular location is the plastid. It localises to the chloroplast. The polypeptide is Large ribosomal subunit protein bL33c (Lotus japonicus (Lotus corniculatus var. japonicus)).